The sequence spans 200 residues: dITP/XTP pyrophosphatase (200 aa).

16 to 21 (SNNDGK) serves as a coordination point for substrate. The Mg(2+) site is built by Glu-46 and Asp-75. The Proton acceptor role is filled by Asp-75. Substrate is bound by residues Ser-76, 154–157 (FGYD), Lys-177, and 182–183 (HR).

It belongs to the HAM1 NTPase family. As to quaternary structure, homodimer. Mg(2+) is required as a cofactor.

It catalyses the reaction XTP + H2O = XMP + diphosphate + H(+). The enzyme catalyses dITP + H2O = dIMP + diphosphate + H(+). It carries out the reaction ITP + H2O = IMP + diphosphate + H(+). Pyrophosphatase that catalyzes the hydrolysis of nucleoside triphosphates to their monophosphate derivatives, with a high preference for the non-canonical purine nucleotides XTP (xanthosine triphosphate), dITP (deoxyinosine triphosphate) and ITP. Seems to function as a house-cleaning enzyme that removes non-canonical purine nucleotides from the nucleotide pool, thus preventing their incorporation into DNA/RNA and avoiding chromosomal lesions. This is dITP/XTP pyrophosphatase from Prochlorococcus marinus (strain SARG / CCMP1375 / SS120).